A 236-amino-acid chain; its full sequence is MTRRYWNINLEEMMEAGVHFGHGTRKWNPKMAPYISAKRKGIHITNLTRTARFLSEACDLVFDAASRGKQFLIVGTKNKAADSVEWAAIRARCHYVNKKWLGGMLTNWSTTETRLHKFRDLRMEQKTGRLNRLPKRDAAMLKRQLSRLQTYLGGIKYMTGVPDIVIIVDQHEEYTALRECITLGIPTICLTDTNCDPDLADISIPANDDAISSIRLILNKLVFAICEGRSSYIRNP.

This sequence belongs to the universal ribosomal protein uS2 family.

The protein localises to the plastid. It is found in the chloroplast. This Nicotiana tabacum (Common tobacco) protein is Small ribosomal subunit protein uS2c (rps2).